Reading from the N-terminus, the 631-residue chain is Phosphomethylpyrimidine synthase (631 aa).

Substrate contacts are provided by residues N239, M268, Y297, H333, 353–355 (SRG), 394–397 (DGLR), and E433. Zn(2+) is bound at residue H437. Residue Y460 coordinates substrate. Residue H501 coordinates Zn(2+). 3 residues coordinate [4Fe-4S] cluster: C581, C584, and C589.

This sequence belongs to the ThiC family. Homodimer. [4Fe-4S] cluster is required as a cofactor.

It carries out the reaction 5-amino-1-(5-phospho-beta-D-ribosyl)imidazole + S-adenosyl-L-methionine = 4-amino-2-methyl-5-(phosphooxymethyl)pyrimidine + CO + 5'-deoxyadenosine + formate + L-methionine + 3 H(+). It functions in the pathway cofactor biosynthesis; thiamine diphosphate biosynthesis. In terms of biological role, catalyzes the synthesis of the hydroxymethylpyrimidine phosphate (HMP-P) moiety of thiamine from aminoimidazole ribotide (AIR) in a radical S-adenosyl-L-methionine (SAM)-dependent reaction. The polypeptide is Phosphomethylpyrimidine synthase (Escherichia coli O6:K15:H31 (strain 536 / UPEC)).